We begin with the raw amino-acid sequence, 167 residues long: S-ribosylhomocysteine lyase (167 aa).

Positions 54, 58, and 128 each coordinate Fe cation.

This sequence belongs to the LuxS family. Homodimer. Fe cation is required as a cofactor.

It carries out the reaction S-(5-deoxy-D-ribos-5-yl)-L-homocysteine = (S)-4,5-dihydroxypentane-2,3-dione + L-homocysteine. In terms of biological role, involved in the synthesis of autoinducer 2 (AI-2) which is secreted by bacteria and is used to communicate both the cell density and the metabolic potential of the environment. The regulation of gene expression in response to changes in cell density is called quorum sensing. Catalyzes the transformation of S-ribosylhomocysteine (RHC) to homocysteine (HC) and 4,5-dihydroxy-2,3-pentadione (DPD). The sequence is that of S-ribosylhomocysteine lyase from Haemophilus influenzae (strain 86-028NP).